A 480-amino-acid polypeptide reads, in one-letter code: Serine carboxypeptidase-like 35 (480 aa).

Residues 1-20 (MKKNALWLLCILVLPAIACG) form the signal peptide. Asn79 and Asn146 each carry an N-linked (GlcNAc...) asparagine glycan. 3 disulfides stabilise this stretch: Cys95–Cys363, Cys257–Cys270, and Cys294–Cys331. Residue Ser188 is part of the active site. An N-linked (GlcNAc...) asparagine glycan is attached at Asn265. Asn352 is a glycosylation site (N-linked (GlcNAc...) asparagine). Catalysis depends on residues Asp399 and His452.

The protein belongs to the peptidase S10 family. In terms of tissue distribution, expressed in seedlings, flowers and siliques.

It is found in the secreted. In terms of biological role, probable carboxypeptidase. This chain is Serine carboxypeptidase-like 35 (SCPL35), found in Arabidopsis thaliana (Mouse-ear cress).